We begin with the raw amino-acid sequence, 325 residues long: Acetyl-coenzyme A carboxylase carboxyl transferase subunit alpha (325 aa).

The region spanning 35–292 (EIEKLEARLA…DKVLKRSLKQ (258 aa)) is the CoA carboxyltransferase C-terminal domain.

Belongs to the AccA family. Acetyl-CoA carboxylase is a heterohexamer composed of biotin carboxyl carrier protein (AccB), biotin carboxylase (AccC) and two subunits each of ACCase subunit alpha (AccA) and ACCase subunit beta (AccD).

Its subcellular location is the cytoplasm. It catalyses the reaction N(6)-carboxybiotinyl-L-lysyl-[protein] + acetyl-CoA = N(6)-biotinyl-L-lysyl-[protein] + malonyl-CoA. Its pathway is lipid metabolism; malonyl-CoA biosynthesis; malonyl-CoA from acetyl-CoA: step 1/1. Component of the acetyl coenzyme A carboxylase (ACC) complex. First, biotin carboxylase catalyzes the carboxylation of biotin on its carrier protein (BCCP) and then the CO(2) group is transferred by the carboxyltransferase to acetyl-CoA to form malonyl-CoA. This is Acetyl-coenzyme A carboxylase carboxyl transferase subunit alpha from Geobacillus sp. (strain WCH70).